The sequence spans 137 residues: Nucleoside diphosphate kinase (137 aa).

ATP-binding residues include lysine 9, phenylalanine 57, arginine 85, threonine 91, arginine 102, and asparagine 112. Histidine 115 (pros-phosphohistidine intermediate) is an active-site residue.

It belongs to the NDK family. Homotetramer. Requires Mg(2+) as cofactor.

Its subcellular location is the cytoplasm. The enzyme catalyses a 2'-deoxyribonucleoside 5'-diphosphate + ATP = a 2'-deoxyribonucleoside 5'-triphosphate + ADP. The catalysed reaction is a ribonucleoside 5'-diphosphate + ATP = a ribonucleoside 5'-triphosphate + ADP. Its function is as follows. Major role in the synthesis of nucleoside triphosphates other than ATP. The ATP gamma phosphate is transferred to the NDP beta phosphate via a ping-pong mechanism, using a phosphorylated active-site intermediate. In Pelobacter propionicus (strain DSM 2379 / NBRC 103807 / OttBd1), this protein is Nucleoside diphosphate kinase.